The following is a 388-amino-acid chain: F-box protein At5g42460 (388 aa).

Positions 1–47 constitute an F-box domain; sequence MTIMSDLPRDLLAEILSRVPLTSLRAVRLTCKKWNDLSKDRSFLKKQ.

In Arabidopsis thaliana (Mouse-ear cress), this protein is F-box protein At5g42460.